Consider the following 522-residue polypeptide: Glucose-1-phosphate adenylyltransferase large subunit, chloroplastic/amyloplastic (522 aa).

A chloroplast-targeting transit peptide spans 1–62; that stretch reads MSSMQFSSVL…RGPAATGAQC (62 aa). The segment covering 28-42 has biased composition (basic and acidic residues); it reads SERLKVGDSSSIRHE. The tract at residues 28 to 54 is disordered; that stretch reads SERLKVGDSSSIRHERASRRMCNGGRG.

This sequence belongs to the bacterial/plant glucose-1-phosphate adenylyltransferase family. In terms of assembly, heterotetramer. In terms of tissue distribution, abundantly expressed in the whole grains, a slightly less abundant expression is seen in leaves, while a low level expression is seen in the roots. A greater expression is seen in the endosperm than in the embryo and pericarp layers.

The protein resides in the plastid. The protein localises to the chloroplast. It localises to the amyloplast. It catalyses the reaction alpha-D-glucose 1-phosphate + ATP + H(+) = ADP-alpha-D-glucose + diphosphate. Its pathway is glycan biosynthesis; starch biosynthesis. Insensitive to 3'phosphoglycerate and orthophosphate. In terms of biological role, this protein plays a role in synthesis of starch. It catalyzes the synthesis of the activated glycosyl donor, ADP-glucose from Glc-1-P and ATP. The polypeptide is Glucose-1-phosphate adenylyltransferase large subunit, chloroplastic/amyloplastic (AGP-L) (Triticum aestivum (Wheat)).